The primary structure comprises 177 residues: Large ribosomal subunit protein uL6 (177 aa).

The protein belongs to the universal ribosomal protein uL6 family. In terms of assembly, part of the 50S ribosomal subunit.

In terms of biological role, this protein binds to the 23S rRNA, and is important in its secondary structure. It is located near the subunit interface in the base of the L7/L12 stalk, and near the tRNA binding site of the peptidyltransferase center. In Cereibacter sphaeroides (strain ATCC 17025 / ATH 2.4.3) (Rhodobacter sphaeroides), this protein is Large ribosomal subunit protein uL6.